Here is a 75-residue protein sequence, read N- to C-terminus: U6-lycotoxin-Ls1e (75 aa).

The first 21 residues, 1–21 (MKLLLFTALVLVVISLIEVEA), serve as a signal peptide directing secretion. A propeptide spanning residues 22-25 (ENER) is cleaved from the precursor.

Belongs to the neurotoxin 19 (CSTX) family. 06 (U6-Lctx) subfamily. Contains 4 disulfide bonds. As to expression, expressed by the venom gland.

Its subcellular location is the secreted. The protein is U6-lycotoxin-Ls1e of Lycosa singoriensis (Wolf spider).